The primary structure comprises 398 residues: Acetate kinase (398 aa).

N8 is a Mg(2+) binding site. ATP is bound at residue K15. R89 contributes to the substrate binding site. D146 functions as the Proton donor/acceptor in the catalytic mechanism. Residues 206 to 210 (HIGNG), 283 to 285 (DMR), and 331 to 335 (GMGEN) each bind ATP. E383 contacts Mg(2+).

The protein belongs to the acetokinase family. Homodimer. It depends on Mg(2+) as a cofactor. Requires Mn(2+) as cofactor.

Its subcellular location is the cytoplasm. The catalysed reaction is acetate + ATP = acetyl phosphate + ADP. The protein operates within metabolic intermediate biosynthesis; acetyl-CoA biosynthesis; acetyl-CoA from acetate: step 1/2. Its function is as follows. Catalyzes the formation of acetyl phosphate from acetate and ATP. Can also catalyze the reverse reaction. The polypeptide is Acetate kinase (Streptococcus pyogenes serotype M2 (strain MGAS10270)).